The sequence spans 330 residues: uncharacterized protein (330 aa).

Helical transmembrane passes span Leu-15–Leu-35, Phe-41–Gly-61, Gly-72–Ala-92, Leu-102–Phe-122, Val-125–Gly-145, Leu-175–Ser-195, Val-201–Val-221, Leu-238–Ser-258, Ser-264–Leu-284, and Glu-286–Ile-306. EamA domains are found at residues Phe-22 to Leu-146 and Leu-182 to Gln-308.

Belongs to the EamA transporter family.

The protein localises to the cell membrane. This is an uncharacterized protein from Synechocystis sp. (strain ATCC 27184 / PCC 6803 / Kazusa).